Here is a 761-residue protein sequence, read N- to C-terminus: MSVQKMMRVPRKMVGGRIPFFTCSKVFSGFSRRSFHESPLARSTYEEEKVLVDEIKQKLTPDDIERCNKLRNIGISAHIDSGKTTFTERVLYYTKRIKAIHEVRGRDNVGAKMDSMDLEREKGITIQSAATYCSWDKEGKNYHFNLIDTPGHIDFTIEVERALRVLDGAVLVVCAVSGVQSQTVTVDRQMRRYNVPRVTFINKMDRMGSDPFRAIEQLNSKLKIPAAAVQIPIGSESSLSGVVDLINRVAIYNKGDNGEIIEKGPVPENLKPLMEEKRQLLIETLADVDDEMAEMFLEEKEPTTQQIKDAIRRSTIARSFTPVLMGSALANTGIQPVLDAIVDYLPNPSEVLNTALDVSNNEAKVNLVPAVQQPFVGLAFKLEEGKYGQLTYVRVYQGRLRKGNYITNVKTGKKVKVARLVRMHSSEMEDVDEVGSGEICATFGIDCASGDTFTDGSVQYSMSSMYVPDAVVSLSITPNSKDASNFSKALNRFQKEDPTFRVKFDPESKETIISGMGELHLEIYVERMRREYNVDCVTGKPQVSYRESITIPADFDYTHKKQSGGAGQYGRVIGTLSPVDDITKGNIFETAIVGGRIPDKYLAACGKGFEEVCEKGPLIGHRVLDVKMLINDGAIHAVDSNELSFKTATMSAFRDAFLRAQPVIMEPIMNVSVTSPNEFQGNVIGLLNKLQAVIQDTENGHDEFTLKAECALSTMFGFATSLRASTQGKGEFSLEFSHYAPTAPHVQKELISEFQKKQAKK.

The N-terminal 42 residues, 1-42 (MSVQKMMRVPRKMVGGRIPFFTCSKVFSGFSRRSFHESPLAR), are a transit peptide targeting the mitochondrion. The region spanning 68–349 (NKLRNIGISA…AIVDYLPNPS (282 aa)) is the tr-type G domain. GTP is bound by residues 77–84 (AHIDSGKT), 148–152 (DTPGH), and 202–205 (NKMD).

Belongs to the TRAFAC class translation factor GTPase superfamily. Classic translation factor GTPase family. EF-G/EF-2 subfamily. In terms of processing, the precursor is processed in two steps involving mitochondrial intermediate peptidase (MIP) and mitochondrial processing peptidase (MPP).

It is found in the mitochondrion. It participates in protein biosynthesis; polypeptide chain elongation. Mitochondrial GTPase that catalyzes the GTP-dependent ribosomal translocation step during translation elongation. During this step, the ribosome changes from the pre-translocational (PRE) to the post-translocational (POST) state as the newly formed A-site-bound peptidyl-tRNA and P-site-bound deacylated tRNA move to the P and E sites, respectively. Catalyzes the coordinated movement of the two tRNA molecules, the mRNA and conformational changes in the ribosome. This is Elongation factor G, mitochondrial from Saccharomyces cerevisiae (strain YJM789) (Baker's yeast).